Reading from the N-terminus, the 360-residue chain is Phospho-N-acetylmuramoyl-pentapeptide-transferase (360 aa).

The next 10 helical transmembrane spans lie at threonine 26 to glutamine 46, threonine 73 to leucine 93, valine 98 to leucine 118, leucine 136 to valine 156, tryptophan 168 to serine 188, glycine 199 to serine 219, glycine 235 to tryptophan 255, valine 263 to alanine 283, isoleucine 288 to valine 308, and valine 338 to lysine 358.

It belongs to the glycosyltransferase 4 family. MraY subfamily. Requires Mg(2+) as cofactor.

The protein resides in the cell inner membrane. The enzyme catalyses UDP-N-acetyl-alpha-D-muramoyl-L-alanyl-gamma-D-glutamyl-meso-2,6-diaminopimeloyl-D-alanyl-D-alanine + di-trans,octa-cis-undecaprenyl phosphate = di-trans,octa-cis-undecaprenyl diphospho-N-acetyl-alpha-D-muramoyl-L-alanyl-D-glutamyl-meso-2,6-diaminopimeloyl-D-alanyl-D-alanine + UMP. The protein operates within cell wall biogenesis; peptidoglycan biosynthesis. Its function is as follows. Catalyzes the initial step of the lipid cycle reactions in the biosynthesis of the cell wall peptidoglycan: transfers peptidoglycan precursor phospho-MurNAc-pentapeptide from UDP-MurNAc-pentapeptide onto the lipid carrier undecaprenyl phosphate, yielding undecaprenyl-pyrophosphoryl-MurNAc-pentapeptide, known as lipid I. In Halorhodospira halophila (strain DSM 244 / SL1) (Ectothiorhodospira halophila (strain DSM 244 / SL1)), this protein is Phospho-N-acetylmuramoyl-pentapeptide-transferase.